The following is a 133-amino-acid chain: Agglutinin alpha chain (133 aa).

Positions 1 to 133 (GKAFDDGAFT…LDYFSMYLSL (133 aa)) constitute a Jacalin-type lectin domain. The stretch at residues 7 to 64 (GAFTGIREINLSYNKETAIGDFQVVYDLNGSPYVGQNHKSFITGFTPVKISLDFPSEY) is a repeat. An N-linked (GlcNAc...) asparagine; when associated with variant T-45; partial glycan is attached at Asn-43. The tract at residues 68–89 (VSGYTGNVSGYVVVRSLTFKTN) is igA-binding. N-linked (GlcNAc...) asparagine; partial glycosylation is present at Asn-74. Positions 76–130 (SGYVVVRSLTFKTNKKTYGPYGVTSGTPFNLPIENGLIVGFKGSIGYWLDYFSMY) form a repeat.

It belongs to the jacalin lectin family. As to quaternary structure, tetramer of four alpha chains associated with two or four beta chains.

D-galactose-specific lectin, binds the T-antigen structure Gal-beta1,3-GalNAc (Thomsen-Friedenreich-antigen-specific lectin). Potent and selective stimulant of distinct T- and B-cell functions. Shows a unique ability to specifically recognize IgA-1 from human serum. This Artocarpus integer (Jack fruit) protein is Agglutinin alpha chain.